A 300-amino-acid polypeptide reads, in one-letter code: tRNA dimethylallyltransferase (300 aa).

9-16 (GPTASGKS) is an ATP binding site. Position 11–16 (11–16 (TASGKS)) interacts with substrate. The interval 34–37 (DSKQ) is interaction with substrate tRNA.

This sequence belongs to the IPP transferase family. As to quaternary structure, monomer. It depends on Mg(2+) as a cofactor.

The catalysed reaction is adenosine(37) in tRNA + dimethylallyl diphosphate = N(6)-dimethylallyladenosine(37) in tRNA + diphosphate. Functionally, catalyzes the transfer of a dimethylallyl group onto the adenine at position 37 in tRNAs that read codons beginning with uridine, leading to the formation of N6-(dimethylallyl)adenosine (i(6)A). The polypeptide is tRNA dimethylallyltransferase (Ehrlichia canis (strain Jake)).